The chain runs to 681 residues: Angiomotin-like 2b (681 aa).

Residues Gly68–Gln84 are compositionally biased toward low complexity. Residues Gly68–Asp106 are disordered. Residues Pro90–Glu102 are compositionally biased toward polar residues. At Tyr126 the chain carries Phosphotyrosine; by FGFR1. Coiled coils occupy residues Asn268–Gly319, Ile362–Thr441, and Val481–Lys508. Positions Gln589–Arg618 are disordered. The segment covering Thr597–His611 has biased composition (polar residues). Positions Glu678 to Ile681 match the PDZ-binding motif.

Belongs to the angiomotin family. Interacts with SRC. Post-translationally, phosphorylation at Tyr-126 is necessary for efficient binding to SRC and synergistically functioning with SRC to activate the downstream MAPK pathway. Expressed in endothelial cells.

The protein localises to the recycling endosome. The protein resides in the cytoplasm. It is found in the cell projection. Its subcellular location is the podosome. It localises to the cell junction. Its function is as follows. Required for proper architecture of actin filaments and for cell movements during embryogenesis. Plays a role in the radial actin fiber architecture in skin epithelial cells, thereby maintains cell geometry, size and cell interconnectivity within the skin. Plays an important role in coupling actin fibers to cell junctions in endothelial cells and is therefore required for correct endothelial cell morphology and maintenance of dorsal aorta lumen expansion during embryogenesis. May further play a role in the polarity, proliferation and migration of endothelial cells, and therefore participates in angiogenesis. May regulate the translocation of phosphorylated SRC to peripheral cell-matrix adhesion sites. This chain is Angiomotin-like 2b, found in Danio rerio (Zebrafish).